Reading from the N-terminus, the 122-residue chain is Serum amyloid A-1 protein (122 aa).

A signal peptide spans 1–19; it reads MKLLTSLVFCSLLLGVCHG. The interval 20-45 is important for amyloid formation; that stretch reads GFFSFVHEAFQGAGDMWRAYTDMKEA. Residues 91–108 show a composition bias toward basic and acidic residues; the sequence is HEDTIADQEANRHGRSGK. Positions 91 to 122 are disordered; it reads HEDTIADQEANRHGRSGKDPNYYRPPGLPDKY.

This sequence belongs to the SAA family. In terms of assembly, homohexamer; dimer of trimers. Can form amyloid fibrils after partial proteolysis; the native, undenatured protein does not form amyloid fibrils (in vitro). Apolipoprotein of the HDL complex. Binds to heparin. Detected in blood plasma (at protein level). Detected in liver.

The protein localises to the secreted. Functionally, major acute phase protein. This chain is Serum amyloid A-1 protein (Saa1), found in Mus musculus (Mouse).